The following is a 225-amino-acid chain: Thymidylate kinase (225 aa).

12–19 serves as a coordination point for ATP; the sequence is GGEGAGKS.

Belongs to the thymidylate kinase family.

It catalyses the reaction dTMP + ATP = dTDP + ADP. Functionally, phosphorylation of dTMP to form dTDP in both de novo and salvage pathways of dTTP synthesis. This Chelativorans sp. (strain BNC1) protein is Thymidylate kinase.